The sequence spans 929 residues: Type I restriction enzyme SauCOLORF180P endonuclease subunit (929 aa).

The 165-residue stretch at 254 to 418 folds into the Helicase ATP-binding domain; sequence QQATETGNNG…DGRTTADIFG (165 aa). ATP is bound at residue 268-274; the sequence is TTGSGKT.

Belongs to the HsdR family. The type I restriction/modification system is composed of three polypeptides R, M and S.

The enzyme catalyses Endonucleolytic cleavage of DNA to give random double-stranded fragments with terminal 5'-phosphates, ATP is simultaneously hydrolyzed.. Its function is as follows. The restriction (R) subunit of a type I restriction enzyme that recognizes an undetermined sequence and cleaves a random distance away. Subunit R is required for both nuclease and ATPase activities, but not for modification. After locating a non-methylated recognition site, the enzyme complex serves as a molecular motor that translocates DNA in an ATP-dependent manner until a collision occurs that triggers cleavage. The protein is Type I restriction enzyme SauCOLORF180P endonuclease subunit of Staphylococcus aureus (strain COL).